Reading from the N-terminus, the 284-residue chain is MKVFILALLALTATTAIAQLETTCSQGFRQYQQQQQPGQRQLLEQMRPCVAFLQQQCRPLRMPFLQTQVEQLSSCQIVQYQCCQQLAQIPEQIRCHAIHNVVEAIMQQQSQQQRQERQQQAQHKSMRMLLETLYLMCNIYVPIQCQQQQQLGQQQQQQLQEQLTPCATFLQHQCSPVTVPFPQIPVDQPTSCQNVQHQCCRQLSQIPEQFRCQAIHNVAEAIRQQQPQQQWQGMYQPQQPAQLESIRMSLQALRSMCSIYIPVQCPAPTAYNIPMVATYTGGAC.

The first 18 residues, 1–18, serve as a signal peptide directing secretion; it reads MKVFILALLALTATTAIA.

The protein belongs to the prolamin family. In terms of processing, contains disulfide bonds. As to expression, expressed only in developing endosperms. Not detected in roots, stems or leaves.

Functionally, seed storage protein. Might be integrated via inter-chain disulfide bonds within the glutenin polymer. The chain is Avenin-like b5 from Triticum aestivum (Wheat).